A 252-amino-acid polypeptide reads, in one-letter code: 5'-nucleotidase SurE (252 aa).

Residues aspartate 8, aspartate 9, serine 39, and asparagine 91 each contribute to the a divalent metal cation site.

Belongs to the SurE nucleotidase family. A divalent metal cation serves as cofactor.

The protein resides in the cytoplasm. It carries out the reaction a ribonucleoside 5'-phosphate + H2O = a ribonucleoside + phosphate. In terms of biological role, nucleotidase that shows phosphatase activity on nucleoside 5'-monophosphates. This chain is 5'-nucleotidase SurE, found in Bordetella bronchiseptica (strain ATCC BAA-588 / NCTC 13252 / RB50) (Alcaligenes bronchisepticus).